Consider the following 553-residue polypeptide: CDP-diacylglycerol--glycerol-3-phosphate 3-phosphatidyltransferase, mitochondrial (553 aa).

The transit peptide at 1–25 (MAAPAAGPVFWRRLLGLLPGRPGLA) directs the protein to the mitochondrion. At S46 the chain carries Phosphoserine. 121-128 (ASLYLGTG) is an ATP binding site. PLD phosphodiesterase domains lie at 212 to 238 (TIGL…SDSY) and 457 to 490 (RGWT…GYRS). Active-site residues include H217, K219, and D224.

Belongs to the CDP-alcohol phosphatidyltransferase class-II family. As to expression, widely expressed with higher expression in testis, liver and brain.

It is found in the mitochondrion. The catalysed reaction is a CDP-1,2-diacyl-sn-glycerol + sn-glycerol 3-phosphate = a 1,2-diacyl-sn-glycero-3-phospho-(1'-sn-glycero-3'-phosphate) + CMP + H(+). The protein operates within phospholipid metabolism; phosphatidylglycerol biosynthesis; phosphatidylglycerol from CDP-diacylglycerol: step 1/2. Activated by calcium and magnesium and inhibited by other bivalent cations. Functionally, functions in the biosynthesis of the anionic phospholipids phosphatidylglycerol and cardiolipin. The protein is CDP-diacylglycerol--glycerol-3-phosphate 3-phosphatidyltransferase, mitochondrial (Pgs1) of Mus musculus (Mouse).